The chain runs to 553 residues: Zinc finger matrin-type protein 1 (553 aa).

The segment at Thr16 to Asn36 is disordered. Matrin-type zinc fingers lie at residues Thr61–Leu91, Lys125–Gln155, Lys223–Arg253, and Tyr275–Met305. Disordered regions lie at residues Gln341 to Val402 and His428 to Phe553. Positions Asp350–Pro362 are enriched in acidic residues. The span at Arg431–Ser453 shows a compositional bias: low complexity. Residues Lys456–Ile476 show a composition bias toward basic residues. The span at Arg477 to Asp513 shows a compositional bias: basic and acidic residues.

It localises to the nucleus. In Xenopus tropicalis (Western clawed frog), this protein is Zinc finger matrin-type protein 1 (zmat1).